A 405-amino-acid chain; its full sequence is FK506-binding protein 4 (405 aa).

Disordered regions lie at residues 49–117 and 164–297; these read THNP…EDEL and QQDE…PQKK. Composition is skewed to acidic residues over residues 59 to 84, 98 to 117, and 165 to 201; these read ESDD…EMEV, VEEE…EDEL, and QDED…EEEA. Composition is skewed to basic and acidic residues over residues 238-252 and 265-276; these read RKAE…EDAA and AKVEGEKAEEKP. Positions 319-405 constitute a PPIase FKBP-type domain; sequence GKRLGMRYIG…KFDVKLVSIN (87 aa).

The protein belongs to the FKBP-type PPIase family. FKBP3/4 subfamily. As to quaternary structure, binds to histones H3 and H4.

The protein resides in the nucleus. It carries out the reaction [protein]-peptidylproline (omega=180) = [protein]-peptidylproline (omega=0). With respect to regulation, inhibited by both FK506 and rapamycin. In terms of biological role, PPIase that acts as a histone chaperone. Histone proline isomerase that increases the rate of cis-trans isomerization at prolines on the histone H3 N-terminal tail. Proline isomerization influences H3 methylation thereby regulating gene expression. The protein is FK506-binding protein 4 (FPR4) of Cryptococcus neoformans var. neoformans serotype D (strain B-3501A) (Filobasidiella neoformans).